The chain runs to 284 residues: Aldo-keto reductase MAV_3816 (284 aa).

Y59 functions as the Proton donor in the catalytic mechanism. NADPH contacts are provided by L199, I237, R239, S240, A241, S248, and R275.

Belongs to the aldo/keto reductase family.

The chain is Aldo-keto reductase MAV_3816 from Mycobacterium avium (strain 104).